The sequence spans 95 residues: Protein TusB (95 aa).

This sequence belongs to the DsrH/TusB family. In terms of assembly, heterohexamer, formed by a dimer of trimers. The hexameric TusBCD complex contains 2 copies each of TusB, TusC and TusD. The TusBCD complex interacts with TusE.

The protein localises to the cytoplasm. Its function is as follows. Part of a sulfur-relay system required for 2-thiolation of 5-methylaminomethyl-2-thiouridine (mnm(5)s(2)U) at tRNA wobble positions. The polypeptide is Protein TusB (Shigella dysenteriae serotype 1 (strain Sd197)).